Consider the following 49-residue polypeptide: uncharacterized protein (49 aa).

A signal peptide spans Met1–Met22.

It is found in the secreted. This is an uncharacterized protein from Dictyostelium discoideum (Social amoeba).